The primary structure comprises 792 residues: Xaa-Pro dipeptidyl-peptidase (792 aa).

Residues Ser363, Asp482, and His513 each act as charge relay system in the active site.

This sequence belongs to the peptidase S15 family. In terms of assembly, homodimer.

The protein resides in the cytoplasm. It catalyses the reaction Hydrolyzes Xaa-Pro-|- bonds to release unblocked, N-terminal dipeptides from substrates including Ala-Pro-|-p-nitroanilide and (sequentially) Tyr-Pro-|-Phe-Pro-|-Gly-Pro-|-Ile.. Removes N-terminal dipeptides sequentially from polypeptides having unsubstituted N-termini provided that the penultimate residue is proline. The polypeptide is Xaa-Pro dipeptidyl-peptidase (Lactobacillus delbrueckii subsp. bulgaricus (strain ATCC 11842 / DSM 20081 / BCRC 10696 / JCM 1002 / NBRC 13953 / NCIMB 11778 / NCTC 12712 / WDCM 00102 / Lb 14)).